Here is a 557-residue protein sequence, read N- to C-terminus: Putative glutathione-regulated potassium-efflux system protein KefB (557 aa).

10 helical membrane-spanning segments follow: residues 2–22, 24–44, 56–76, 84–104, 121–141, 146–166, 176–196, 199–219, 237–257, and 260–280; these read LGYLLAGIAIGPWGLGFISDV, EILHFSELGVVFLMFIIGLEL, IFGVGAAQVLLSAALLAGLLM, AAVVGGIGFAMSSTAMALQLM, VLLFQDLAVIPALALVPLLAG, HFDWMKIGMKVLEFVGMLIGG, FIAASGVREVFTAATLLLVLG, LFMDALGLSMALGTFIAGVLL, GLLLGLFFISVGMSLNLGVLY, and LLWVVISVVVLVAVKILVLYL. The RCK N-terminal domain maps to 356 to 475; that stretch reads KPQVIVVGFG…AGVTQFSRET (120 aa).

Belongs to the monovalent cation:proton antiporter 2 (CPA2) transporter (TC 2.A.37) family. KefB subfamily. In terms of assembly, interacts with the regulatory subunit KefG.

The protein localises to the cell inner membrane. Functionally, pore-forming subunit of a potassium efflux system that confers protection against electrophiles. Catalyzes K(+)/H(+) antiport. This Shigella flexneri protein is Putative glutathione-regulated potassium-efflux system protein KefB.